Here is a 386-residue protein sequence, read N- to C-terminus: Probable pectin lyase F (386 aa).

The N-terminal stretch at 1-16 (MKTAVLSLLLALQAYA) is a signal peptide. A disulfide bridge links C77 with C101. A glycan (N-linked (GlcNAc...) asparagine) is linked at N124. R251 is a catalytic residue. C326 and C334 form a disulfide bridge.

This sequence belongs to the polysaccharide lyase 1 family.

It is found in the secreted. The enzyme catalyses Eliminative cleavage of (1-&gt;4)-alpha-D-galacturonan methyl ester to give oligosaccharides with 4-deoxy-6-O-methyl-alpha-D-galact-4-enuronosyl groups at their non-reducing ends.. Pectinolytic enzymes consist of four classes of enzymes: pectin lyase, polygalacturonase, pectin methylesterase and rhamnogalacturonase. Among pectinolytic enzymes, pectin lyase is the most important in depolymerization of pectin, since it cleaves internal glycosidic bonds of highly methylated pectins. This Neosartorya fischeri (strain ATCC 1020 / DSM 3700 / CBS 544.65 / FGSC A1164 / JCM 1740 / NRRL 181 / WB 181) (Aspergillus fischerianus) protein is Probable pectin lyase F (pelF).